Here is a 184-residue protein sequence, read N- to C-terminus: Photosystem I assembly protein Ycf4 (184 aa).

A run of 2 helical transmembrane segments spans residues 22–42 (FCWA…GTSS) and 57–77 (IVFF…LFIS).

This sequence belongs to the Ycf4 family.

The protein localises to the plastid. It localises to the chloroplast thylakoid membrane. Seems to be required for the assembly of the photosystem I complex. This Gossypium barbadense (Sea Island cotton) protein is Photosystem I assembly protein Ycf4.